A 408-amino-acid polypeptide reads, in one-letter code: D-inositol 3-phosphate glycosyltransferase (408 aa).

His-7 serves as a coordination point for 1D-myo-inositol 3-phosphate. UDP-N-acetyl-alpha-D-glucosamine-binding positions include 13–14 (QP) and Gly-21. 1D-myo-inositol 3-phosphate is bound by residues 18–23 (DAGGMN), Lys-76, Tyr-109, Thr-133, and Arg-153. UDP-N-acetyl-alpha-D-glucosamine-binding residues include Arg-227, Lys-232, and Val-288. Phe-297, Arg-298, and Ala-300 together coordinate Mg(2+). 2 residues coordinate UDP-N-acetyl-alpha-D-glucosamine: Glu-310 and Glu-318. Thr-324 contributes to the Mg(2+) binding site.

It belongs to the glycosyltransferase group 1 family. MshA subfamily. As to quaternary structure, homodimer.

The enzyme catalyses 1D-myo-inositol 3-phosphate + UDP-N-acetyl-alpha-D-glucosamine = 1D-myo-inositol 2-acetamido-2-deoxy-alpha-D-glucopyranoside 3-phosphate + UDP + H(+). Catalyzes the transfer of a N-acetyl-glucosamine moiety to 1D-myo-inositol 3-phosphate to produce 1D-myo-inositol 2-acetamido-2-deoxy-glucopyranoside 3-phosphate in the mycothiol biosynthesis pathway. The chain is D-inositol 3-phosphate glycosyltransferase from Paenarthrobacter aurescens (strain TC1).